Consider the following 211-residue polypeptide: MLCRAVCSASRRLAPALGILGVRQKHSLPDLPYDYGALQPHINAEIMQLHHSKHHAAYLNNLNIAEEKYQEALAKGDVTAQVALQPALKFNGGGHINHSIFWTNLSPNGGGEPKGELLEAIKRDFGSFDKFKEKLTAVSVGVQGSGWGWLGFNKERGCLQIAACSNQDPLQGTTGLIPLLGIDVWEHAYYLQLKNVRPDYLKAIWKVIKNS.

A mitochondrion-targeting transit peptide spans Met1 to Gln24. His50 serves as a coordination point for Mn(2+). Tyr58 bears the 3'-nitrotyrosine mark. Lys68 and Lys75 each carry N6-acetyllysine; alternate. Lys68 and Lys75 each carry N6-succinyllysine; alternate. His98 serves as a coordination point for Mn(2+). The residue at position 114 (Lys114) is an N6-acetyllysine. An N6-acetyllysine; alternate mark is found at Lys122 and Lys130. Lys122 and Lys130 each carry N6-succinyllysine; alternate. 2 residues coordinate Mn(2+): Asp183 and His187. N6-acetyllysine is present on Lys202.

Belongs to the iron/manganese superoxide dismutase family. As to quaternary structure, homotetramer. Mn(2+) is required as a cofactor. Nitrated under oxidative stress. Nitration coupled with oxidation inhibits the catalytic activity. In terms of processing, acetylation at Lys-122 decreases enzymatic activity. Deacetylated by SIRT3 upon exposure to ionizing radiations or after long fasting. Post-translationally, polyubiquitinated; leading to proteasomal degradation. Deubiquitinated by USP36 which increases protein stability.

Its subcellular location is the mitochondrion matrix. The enzyme catalyses 2 superoxide + 2 H(+) = H2O2 + O2. Destroys superoxide anion radicals which are normally produced within the cells and which are toxic to biological systems. The polypeptide is Superoxide dismutase [Mn], mitochondrial (SOD2) (Cavia porcellus (Guinea pig)).